The primary structure comprises 362 residues: Heat-inducible transcription repressor HrcA (362 aa).

Belongs to the HrcA family.

Its function is as follows. Negative regulator of class I heat shock genes (grpE-dnaK-dnaJ and groELS operons). Prevents heat-shock induction of these operons. The protein is Heat-inducible transcription repressor HrcA of Bradyrhizobium sp. (strain ORS 278).